A 3164-amino-acid polypeptide reads, in one-letter code: MTDKSIIILSLMVFHSSFINGKTCRRQSVEEWHPQPSSYVVNWTLTENICLDFYRDCWFLGVNTKIDTSGNQAVPQICPLQIQLGDILVISSEPSLQFPEINLMNVSETSFIGCVQNTTTEDQLLFGCRLKGMHTVNSKWLSVGTHYFITVMASGPSPCPLGLRLNVTVKQQFCQESLSSEFCSGHGKCLSEAWSKTYSCHCHPPFSGKYCQELDACSFKPCKNNGSCINKRENWDGQGYECVCHPPFTGKNCSEIIGQCQPHVCFHGNCSNITSNSFICECDEQFSGPFCEMSTKPCVSLLCWKRGICPNSSSAYTYECPKGSSSQNGETDVSECSLVPCQNGTDCIQISNDVMCICSPIFTDLLCKSIQTSCESFSLRNNATCKKWEKDYHCSCISGFTEKNCEKAIDHCRLLSINCLNEEWCFNIIGRFNYVCIPGCPKNPCWFLKNVYLIHQHLCYCGVTFHGICQDKGPAQFEYVWQLGFAGSEGEKCQGVIDAYFFLAANCTEDAICVNDPEDYNSSCRFPREGTKEICANGCSCLSEEDSQEYLYLCFLRWAGNMYLENTTDDQENECQHEAICKDEINRPRCSCSLSYIGRLCVVNVDYCLGNQSISVHGLCLALSHKCNCISLQRYERNICEIDTEDCKSVSCKNGTTSIHLRGYFFCKCVPGFKGTQREIDIDECASHPCKNGATCIDQPGNYFCQCVPPFKVVDGFSCLGNPGYVGIRCEQDIDDCILNACEHNSTCKDLHLSYQCVCLSGWEGNFSEQESNECKMNPCKNNSTCIDLYKSYRCECTSGWTGQNCSEEINECDSDPCMNGGLCHESTIPGQFVCLCPPLYTGRFCHQRYNPCDLLHNPCRNNSTCLALVDGNQHCICREEFEGKNCEIDVKECLFLSCQDYGDCEDMVNNFRCICRPGFSGSLCEIEINECSSEPCKNNGTCVDLTNRFFCNCEPGYHGPFCELDVNKCKISPCLDEENCVYRTDGYNCLCAPGYTGINCEINLDECLSEPCLHDGVCIDGINHYTCDCKSGFFGTHCETNANDCLSNPCLHGRCTELINEYPCSCDADGTSTQCKIKINDCTSIPCMNEGFCQKSAHGFTCICPRGYTGAYCEKSIDNCAEPEFNSVICLNGGICVDGPGHTFDCRCLPGFSGQFCEININECSSSPCLHGADCEDHINGYVCKCQPGWSGHHCEKELECIPNSCVHELCMENEPGSTCLCTPGFMTCSTGLLCGDEIRRITCLTPIFQRTDPISTQTYTVPPSETLVSSFPSIKATRIPAIMDTYPVDQGPKQTGIVKHDILPTTGLAALRISTPLESYLLEELIVTRELSAKHGLLSSADVSSSRFLNFGIHDPAQIVQDKTSVSHMPIRTSAATLGFFFPDRRARTPFIMSSVMSDFIFPTQSLLFENYQTVASSATPTTSVIRSIPGADIELNRQSLLSRGFLLTAASISATPVVSRGAQEDIEEYSADSLISRREHWRLLSPSMSPIFPAKIIISKQVTILNSSALHRFGTKAFNPSEYQAITEASSNQRLTNIKSQAADSLRELSQTCATCSMTEIKSSREFSDQVLHSKQSHFYETFWMNSAILASWCALMGAQTITSGHSFSSATEITPSVAFTEVPSLFPSKKSAKRTILSSSLEESITLSSNLDVNLCLDKTCLSIVPSQTISSDLMNSDLTSKMTTDELSVSANILKLLKIRQYGITMGPTEVLNQDSLLDMEKSKGSHTPFKLHPSDSSLDFELNLQIYPDVTLKTYSEITHANDFKNTLPPLTGSVPDFSEVTTNVAFYTVSATPALSIQTSSSMSVIRPDWPYFTDYMTSLKKEVKTSSEWSKWELQPSVQYQEFPTASWHLPFTRSLTLSSLESILAPQQLTISDFSCVRYYGDSYLEFQNVVLNPQNNISLEFQTFSSYGLLLYVKQDSNLVDGFFIQLFIENGTLKYHFYCPGEAKFKSINTTIRVDDGQKYTLLIRQELYPCKAELTILGRNTQTCESISHVLGKPLPKSGSVFIGGFPDLHGKIQMPVPVKNFTGCIEVIEINNWRSFIPSKAVKNYHINNCRSQGFMLSPTASFVDVSDVTQGVDTMWTSVSPSVAAPSVCQQDVCHNGGTCHPIFLSRGIVSFQCDCPLHFTGRFCEKDASLFFPSFNGNSYLELPFLKFVLEKEHNRTVTIYLTIKTNSLNGTILYSNGNNFGKQFLHLFLVEGRPSVKYGCGNSQNILTVSANYSINTNAFTPITIRYTTPVGSPGVVCMIEMTADGKPPVQKKDTEISQASQAYFESMFLGHIPANVQIHKKSGPVYGFRGCILDLQVNNKEFFIIDEARHGKNIENCHVPWCAHHLCRNNGTCISDNENLFCECPRLYSGKLCQFASCENNPCGNGATCVPKSGTDIVCLCPYGRSGPLCTDAINITQPRFSGTDAFGYTSFLAYSRISDISFHYEFHLKFQLANNHSALQNNLIFFTGQKGHGLNGDDFLAVGLLNGSVVYSYNLGSGIASIRSEPLNLSLGVHTVHLGKFFQEGWLKVDDHKNKSIIAPGRLAGLNVFSQFYVGGYSEYTPDLLPNGADFKNGFQGCIFTLQVRTEKDGHFRGLGNPEGHPNAGRSVGQCHASPCSLMKCGNGGTCIESGTSVYCNCTTGWKGAFCTETVSTCDPEHDPPHHCSRGATCISLPHGYTCFCPLGTTGIYCEQALILIVILEKPKPAEWKVKKEALSISDPSFRSNELSWMSFASFHVRKKTHIQLQFQPLAADGILFYAAQHLKAQSGDFLCISLVNSSVQLRYNLGDRTIILETLQKVTINGSTWHIIKAGRVGAEGYLDLDGINVTEKASTKMSSLDTNTDFYIGGVSSLNLVNPMAIENEPVGFQGCIRQVIINNQELQLTEFGAKGGSNVGDCDGTACGYNTCRNGGECTVNGTTFSCRCLPDWAGNTCNQSVYCLNNLCLHQSLCIPNQSFSYSCLCTLGWVGRYCENKTSFSTAKFMGNSYIKYIDPNYRMRNLQFTTISLNFSTTKTEGLIVWMGTAQNEENDFLAIGLHNQTLKIAVNLGERISVPMSYNNGTFCCNKWHHVVVIQNQTLIKAYVNNSLILSEDIDPHKNFVALNYDGICYLGGFEYGRKVSIVTQEIFKTNFVGKIKDVFFQDPKKIELIKLEGYNVYDGDEQNEVT.

A signal peptide spans 1–21 (MTDKSIIILSLMVFHSSFING). Asn-42, Asn-105, Asn-117, and Asn-166 each carry an N-linked (GlcNAc...) asparagine glycan. 3 consecutive EGF-like domains span residues 170 to 212 (KQQF…KYCQ), 213 to 254 (ELDA…KNCS), and 256 to 292 (IIGQCQPHVCFHGNCSNITSNSFICECDEQFSGPFCE). Cystine bridges form between Cys-174-Cys-189, Cys-183-Cys-200, Cys-202-Cys-211, Cys-217-Cys-228, Cys-222-Cys-242, Cys-244-Cys-253, Cys-260-Cys-270, Cys-265-Cys-280, and Cys-282-Cys-291. 4 N-linked (GlcNAc...) asparagine glycosylation sites follow: Asn-225, Asn-252, Asn-269, and Asn-272. 2 N-linked (GlcNAc...) asparagine glycosylation sites follow: Asn-311 and Asn-343. EGF-like domains lie at 332–368 (DVSECSLVPCQNGTDCIQISNDVMCICSPIFTDLLCK) and 370–406 (IQTSCESFSLRNNATCKKWEKDYHCSCISGFTEKNCE). Intrachain disulfides connect Cys-336-Cys-347, Cys-341-Cys-356, Cys-358-Cys-367, Cys-374-Cys-385, and Cys-396-Cys-405. N-linked (GlcNAc...) asparagine glycosylation is present at Asn-382. N-linked (GlcNAc...) asparagine glycosylation is found at Asn-506, Asn-521, and Asn-566. An EGF-like 6 domain is found at 567 to 602 (TTDDQENECQHEAICKDEINRPRCSCSLSYIGRLCV). 2 disulfide bridges follow: Cys-575–Cys-590 and Cys-592–Cys-601. Residues Asn-611 and Asn-654 are each glycosylated (N-linked (GlcNAc...) asparagine). The EGF-like 7 domain maps to 643-679 (DTEDCKSVSCKNGTTSIHLRGYFFCKCVPGFKGTQRE). Intrachain disulfides connect Cys-652–Cys-667, Cys-685–Cys-696, Cys-690–Cys-705, Cys-707–Cys-719, Cys-737–Cys-748, and Cys-742–Cys-757. Residues 681-720 (DIDECASHPCKNGATCIDQPGNYFCQCVPPFKVVDGFSCL) form the EGF-like 8; calcium-binding domain. Residues 733 to 769 (DIDDCILNACEHNSTCKDLHLSYQCVCLSGWEGNFSE) form the EGF-like 9; calcium-binding domain. Residues Asn-745, Asn-766, Asn-782, Asn-783, and Asn-805 are each glycosylated (N-linked (GlcNAc...) asparagine). One can recognise an EGF-like 10; calcium-binding domain in the interval 771–807 (ESNECKMNPCKNNSTCIDLYKSYRCECTSGWTGQNCS). Disulfide bonds link Cys-775–Cys-786, Cys-780–Cys-795, Cys-797–Cys-806, Cys-813–Cys-824, Cys-818–Cys-835, Cys-837–Cys-846, Cys-853–Cys-866, Cys-860–Cys-876, Cys-878–Cys-887, Cys-894–Cys-905, Cys-899–Cys-914, Cys-916–Cys-925, Cys-932–Cys-943, Cys-937–Cys-952, Cys-954–Cys-963, Cys-970–Cys-981, Cys-975–Cys-990, Cys-992–Cys-1001, Cys-1008–Cys-1019, Cys-1013–Cys-1028, Cys-1030–Cys-1039, Cys-1046–Cys-1056, Cys-1051–Cys-1065, Cys-1067–Cys-1076, Cys-1083–Cys-1094, Cys-1088–Cys-1103, Cys-1105–Cys-1114, Cys-1121–Cys-1137, Cys-1131–Cys-1147, Cys-1149–Cys-1158, Cys-1165–Cys-1176, Cys-1170–Cys-1185, and Cys-1187–Cys-1196. EGF-like domains follow at residues 809–847 (EINECDSDPCMNGGLCHESTIPGQFVCLCPPLYTGRFCH), 849–888 (RYNPCDLLHNPCRNNSTCLALVDGNQHCICREEFEGKNCE), and 890–926 (DVKECLFLSCQDYGDCEDMVNNFRCICRPGFSGSLCE). 2 N-linked (GlcNAc...) asparagine glycosylation sites follow: Asn-862 and Asn-863. The EGF-like 14; calcium-binding domain occupies 928-964 (EINECSSEPCKNNGTCVDLTNRFFCNCEPGYHGPFCE). Asn-940 carries N-linked (GlcNAc...) asparagine glycosylation. Residues 966–1002 (DVNKCKISPCLDEENCVYRTDGYNCLCAPGYTGINCE) enclose the EGF-like 15 domain. Residues 1004–1040 (NLDECLSEPCLHDGVCIDGINHYTCDCKSGFFGTHCE) enclose the EGF-like 16; calcium-binding domain. EGF-like domains lie at 1042 to 1077 (NANDCLSNPCLHGRCTELINEYPCSCDADGTSTQCK), 1079 to 1115 (KINDCTSIPCMNEGFCQKSAHGFTCICPRGYTGAYCE), and 1117 to 1159 (SIDN…QFCE). In terms of domain architecture, EGF-like 20; calcium-binding spans 1161-1197 (NINECSSSPCLHGADCEDHINGYVCKCQPGWSGHHCE). N-linked (GlcNAc...) asparagine glycosylation is found at Asn-1509, Asn-1522, Asn-1906, Asn-1941, Asn-1960, and Asn-2033. In terms of domain architecture, Laminin G-like 1 spans 1883–2063 (FSCVRYYGDS…AVKNYHINNC (181 aa)). 4 disulfide bridges follow: Cys-2037–Cys-2063, Cys-2103–Cys-2114, Cys-2108–Cys-2128, and Cys-2130–Cys-2139. The EGF-like 21 domain maps to 2099 to 2140 (APSVCQQDVCHNGGTCHPIFLSRGIVSFQCDCPLHFTGRFCE). Positions 2145–2339 (LFFPSFNGNS…NIENCHVPWC (195 aa)) constitute a Laminin G-like 2 domain. Asn-2170, Asn-2185, and Asn-2228 each carry an N-linked (GlcNAc...) asparagine glycan. Cystine bridges form between Cys-2308–Cys-2339, Cys-2339–Cys-2350, Cys-2344–Cys-2359, Cys-2375–Cys-2386, Cys-2380–Cys-2396, and Cys-2398–Cys-2407. EGF-like domains are found at residues 2335-2368 (HVPWCAHHLCRNNGTCISDNENLFCECPRLYSGK) and 2371-2408 (QFASCENNPCGNGATCVPKSGTDIVCLCPYGRSGPLCT). Asn-2347 carries an N-linked (GlcNAc...) asparagine glycan. Residues Asn-2412, Asn-2453, Asn-2484, Asn-2506, and Asn-2532 are each glycosylated (N-linked (GlcNAc...) asparagine). The Laminin G-like 3 domain maps to 2419–2609 (SGTDAFGYTS…PNAGRSVGQC (191 aa)). Intrachain disulfides connect Cys-2576–Cys-2609, Cys-2614–Cys-2625, and Cys-2619–Cys-2634. 2 consecutive EGF-like domains span residues 2610-2646 (HASPCSLMKCGNGGTCIESGTSVYCNCTTGWKGAFCT) and 2648-2689 (TVST…IYCE). The N-linked (GlcNAc...) asparagine glycan is linked to Asn-2635. 4 disulfide bridges follow: Cys-2636-Cys-2645, Cys-2652-Cys-2668, Cys-2662-Cys-2677, and Cys-2679-Cys-2688. One can recognise a Laminin G-like 4 domain in the interval 2717–2895 (DPSFRSNELS…AKGGSNVGDC (179 aa)). Residues Asn-2775, Asn-2800, and Asn-2824 are each glycosylated (N-linked (GlcNAc...) asparagine). Cystine bridges form between Cys-2868-Cys-2895, Cys-2900-Cys-2911, Cys-2905-Cys-2920, and Cys-2922-Cys-2931. EGF-like domains follow at residues 2896 to 2932 (DGTACGYNTCRNGGECTVNGTTFSCRCLPDWAGNTCN) and 2933 to 2970 (QSVYCLNNLCLHQSLCIPNQSFSYSCLCTLGWVGRYCE). N-linked (GlcNAc...) asparagine glycosylation occurs at Asn-2914. An N-linked (GlcNAc...) asparagine glycan is attached at Asn-2932. 3 cysteine pairs are disulfide-bonded: Cys-2937-Cys-2948, Cys-2942-Cys-2958, and Cys-2960-Cys-2969. Asn-2951 carries an N-linked (GlcNAc...) asparagine glycan. Residues Asn-2971, Asn-3006, Asn-3036, Asn-3057, Asn-3073, and Asn-3082 are each glycosylated (N-linked (GlcNAc...) asparagine). Positions 2975-3164 (FSTAKFMGNS…YDGDEQNEVT (190 aa)) constitute a Laminin G-like 5 domain.

It belongs to the EYS family.

The protein resides in the cell projection. Its subcellular location is the cilium. It is found in the photoreceptor outer segment. It localises to the cytoplasm. The protein localises to the cytoskeleton. The protein resides in the cilium axoneme. Its subcellular location is the microtubule organizing center. It is found in the centrosome. It localises to the secreted. The protein localises to the extracellular space. The protein resides in the extracellular matrix. Its subcellular location is the interphotoreceptor matrix. Required to maintain the integrity of photoreceptor cells. Specifically required for normal morphology of the photoreceptor ciliary pocket, and might thus facilitate protein trafficking between the photoreceptor inner and outer segments via the transition zone. The polypeptide is Protein eyes shut homolog (EYS) (Pongo abelii (Sumatran orangutan)).